Here is a 126-residue protein sequence, read N- to C-terminus: Small ribosomal subunit protein uS11 (126 aa).

The protein belongs to the universal ribosomal protein uS11 family. Part of the 30S ribosomal subunit.

Located on the platform of the 30S subunit. The protein is Small ribosomal subunit protein uS11 of Methanosarcina acetivorans (strain ATCC 35395 / DSM 2834 / JCM 12185 / C2A).